Consider the following 127-residue polypeptide: Protein ApaG (127 aa).

Residues 3-127 enclose the ApaG domain; that stretch reads DDPRYRVEVE…FVLSVPRTLH (125 aa).

The protein is Protein ApaG of Xanthomonas oryzae pv. oryzae (strain MAFF 311018).